We begin with the raw amino-acid sequence, 387 residues long: Phosphoglycerate kinase (387 aa).

Substrate-binding positions include 21–23 (DLN), R36, 59–62 (HLGR), R113, and R146. Residues K197, E314, and 340–343 (GGDT) contribute to the ATP site.

It belongs to the phosphoglycerate kinase family. Monomer.

It localises to the cytoplasm. It catalyses the reaction (2R)-3-phosphoglycerate + ATP = (2R)-3-phospho-glyceroyl phosphate + ADP. It participates in carbohydrate degradation; glycolysis; pyruvate from D-glyceraldehyde 3-phosphate: step 2/5. The protein is Phosphoglycerate kinase of Proteus mirabilis (strain HI4320).